The chain runs to 280 residues: MTTRILGVVQLDQRRLTDDLAVLAKSNFSSEYSDFACGRWEFCMLRNQSGKQEEQRVVVHETPALATPLGQSLPYLNELLDNHFDRDSIRYARIIRISENACIIPHRDYLELEGKFIRVHLVLDTNEKCSNTEENNIFHMGRGEIWFLDASLPHSAGCFSPTPRLHLVVDIEGTRSLEEVAINVEQPSARNATVDTRKEWTDETLESVLGFSEIISEANYREIVAILAKLHFFHKVHCVDMYGWLKEICRRRGEPALIEKANSLERFYLIDRAAGEVMTY.

Fe cation contacts are provided by H106, D108, and H154. R164 serves as a coordination point for 2-oxoglutarate.

It belongs to the L-proline cis-4-/cis-3-hydroxylase family. Fe(2+) serves as cofactor.

It carries out the reaction L-proline + 2-oxoglutarate + O2 = cis-4-hydroxy-L-proline + succinate + CO2. Its activity is regulated as follows. Inhibited by metal ions such as Co(2+), Zn(2+), Cu(2+) or Ni(2+). Is also inhibited by EDTA or diethylpyrocarbonate (DEPC) in vitro. Unlike the procollagen-proline cis-3- and trans-4-hydroxylases from mammals, does not necessarily require L-ascorbate for activity although it does increase the activity of the enzyme. Its function is as follows. Dioxygenase that catalyzes the 2-oxoglutarate-dependent selective hydroxylation of free L-proline to cis-4-hydroxy-L-proline (cis-4-Hyp). The chain is L-proline cis-4-hydroxylase from Mesorhizobium japonicum (strain LMG 29417 / CECT 9101 / MAFF 303099) (Mesorhizobium loti (strain MAFF 303099)).